A 288-amino-acid polypeptide reads, in one-letter code: UTP--glucose-1-phosphate uridylyltransferase (288 aa).

It belongs to the UDPGP type 2 family.

The enzyme catalyses alpha-D-glucose 1-phosphate + UTP + H(+) = UDP-alpha-D-glucose + diphosphate. It functions in the pathway glycolipid metabolism; diglucosyl-diacylglycerol biosynthesis. Functionally, catalyzes the formation of UDP-glucose from glucose-1-phosphate and UTP. This is an intermediate step in the biosynthesis of diglucosyl-diacylglycerol (Glc2-DAG), i.e. a glycolipid found in the membrane, which is also used as a membrane anchor for lipoteichoic acid (LTA). In Staphylococcus epidermidis (strain ATCC 35984 / DSM 28319 / BCRC 17069 / CCUG 31568 / BM 3577 / RP62A), this protein is UTP--glucose-1-phosphate uridylyltransferase (gtaB).